A 392-amino-acid chain; its full sequence is Speckle-type POZ protein-like (392 aa).

The MATH domain maps to 31 to 161; it reads KFSYMWTINN…DDKLTLYCEV (131 aa). One can recognise a BTB domain in the interval 200-267; the sequence is TDCSLFVEGK…IYTGGTPHVD (68 aa).

It belongs to the Tdpoz family. Homodimer. Heterodimer with SPOP. Component of cullin-RING-based BCR (BTB-CUL3-RBX1) E3 ubiquitin-protein ligase complexes containing homodimeric SPOPL or the heterodimer formed by SPOP and SPOPL.

Its subcellular location is the nucleus. Its pathway is protein modification; protein ubiquitination. Component of a cullin-RING-based BCR (BTB-CUL3-RBX1) E3 ubiquitin-protein ligase complex that mediates the ubiquitination and subsequent proteasomal degradation of target proteins, but with relatively low efficiency. This is Speckle-type POZ protein-like (spopl) from Xenopus laevis (African clawed frog).